The chain runs to 312 residues: D-alanine--D-alanine ligase (312 aa).

The ATP-grasp domain maps to 103–303 (KQQLVPHGIR…YADLVQAIVD (201 aa)). 130–186 (MPRPYVLKPVNEGSSVGVAIIKERDNHGVPIHRDSHGPWQTFATLLAEPFIRGRELT) is an ATP binding site. Mg(2+) is bound by residues D254, E270, and N272.

It belongs to the D-alanine--D-alanine ligase family. Requires Mg(2+) as cofactor. It depends on Mn(2+) as a cofactor.

The protein localises to the cytoplasm. It carries out the reaction 2 D-alanine + ATP = D-alanyl-D-alanine + ADP + phosphate + H(+). It participates in cell wall biogenesis; peptidoglycan biosynthesis. Its function is as follows. Cell wall formation. The protein is D-alanine--D-alanine ligase of Rhizorhabdus wittichii (strain DSM 6014 / CCUG 31198 / JCM 15750 / NBRC 105917 / EY 4224 / RW1) (Sphingomonas wittichii).